Reading from the N-terminus, the 1128-residue chain is Testis-expressed protein 2 (1128 aa).

3 disordered regions span residues 1–28 (MTSLNGRHAEKTIDMPKPSAPKVHVQRS), 71–99 (AKEDLYLESQGGHDPAGPVSTAPADGLSV), and 130–279 (PLAL…FFKV). Positions 130–186 (PLALSPGSSSSGPLASSPSVSSLSEQKTSSSSPLSSPSKSPVLSSSASSSALSSAKP) are enriched in low complexity. S195 bears the Phosphoserine mark. A compositionally biased stretch (polar residues) spans 248–274 (QFTQPRNTGGDSKTAPSSPLTSPSDTR). T261 is subject to Phosphothreonine. S264, S265, S269, and S294 each carry phosphoserine. Positions 345-387 (KEEEGDSEGEGYGSDSNTSRSDHLKPTEDASKEVEPKGSQASS) are disordered. A compositionally biased stretch (basic and acidic residues) spans 364–380 (RSDHLKPTEDASKEVEP). 2 helical membrane-spanning segments follow: residues 473–493 (TLGFFIMCVYAYLILPLPYYM) and 495–515 (GLFLGVGLGFMTAVCMIWFFT). The N-linked (GlcNAc...) asparagine glycan is linked to N593. Residues 645–671 (SKAQSDKEATEEKPPPEKELPSEDLKK) show a composition bias toward basic and acidic residues. 4 disordered regions span residues 645-688 (SKAQ…DPIL), 716-765 (RKPA…QKEL), 787-821 (QDNRSPHRSPVQSAESSPTASKKLPEAPPSEEEEQ), and 945-981 (ADSDEESSSAGSSEEDDPPEPTAGDKQPLPGAEGYVG). S733, S739, S745, S749, S752, S799, and S816 each carry phosphoserine. Positions 736–751 (SSPSGHLSHSRSSSKG) are enriched in low complexity. Polar residues predominate over residues 796–806 (PVQSAESSPTA). Positions 817–1102 (EEEEQEAWVN…MPNMDDVYIP (286 aa)) constitute an SMP-LTD domain. Residues 946–963 (DSDEESSSAGSSEEDDPP) are compositionally biased toward acidic residues.

Its subcellular location is the endoplasmic reticulum membrane. It is found in the nucleus membrane. During endoplasmic reticulum (ER) stress or when cellular ceramide levels increase, may induce contacts between the ER and medial-Golgi complex to facilitate non-vesicular transport of ceramides from the ER to the Golgi complex where they are converted to complex sphingolipids, preventing toxic ceramide accumulation. In Mus musculus (Mouse), this protein is Testis-expressed protein 2 (Tex2).